We begin with the raw amino-acid sequence, 556 residues long: Transcription factor IIIB 70 kDa subunit (556 aa).

The TFIIB-type zinc-finger motif lies at 8–41; the sequence is SSRKCKNCGSTDFVRDISNTTNELICKVCGLVTE. The Zn(2+) site is built by Cys-12, Cys-15, Cys-33, and Cys-36. 2 consecutive repeat copies span residues 98–174 and 193–272. The interaction with TBP and with the Pol III subunit C34 stretch occupies residues 98-272; the sequence is LKAVSYALNI…EETLQQRLNE (175 aa). The segment at 284 to 556 is interaction with TBP; sequence KEFRDDETEV…DAINGLFGQK (273 aa). 2 disordered regions span residues 287–309 and 477–501; these read RDDETEVNEGERSAESKPPSFDK and ADLASGNTSLRKKRSKRTNRNQSSA. Positions 295 to 309 are enriched in basic and acidic residues; the sequence is EGERSAESKPPSFDK. Basic residues predominate over residues 486 to 495; that stretch reads LRKKRSKRTN.

It belongs to the TFIIB family. TFIIIB comprises the TATA-binding protein (TBP), the B-related factor (BRF) and a 70 kDa polypeptide.

It localises to the nucleus. Functionally, general activator of RNA polymerase III transcription. Interacts with TBP. Binds to Pol III subunit C34 and to the TAU135 component of TFIIIC. The chain is Transcription factor IIIB 70 kDa subunit (TDS4) from Kluyveromyces lactis (strain ATCC 8585 / CBS 2359 / DSM 70799 / NBRC 1267 / NRRL Y-1140 / WM37) (Yeast).